The chain runs to 566 residues: Proline--tRNA ligase 1 (566 aa).

It belongs to the class-II aminoacyl-tRNA synthetase family. ProS type 1 subfamily. As to quaternary structure, homodimer.

Its subcellular location is the cytoplasm. The catalysed reaction is tRNA(Pro) + L-proline + ATP = L-prolyl-tRNA(Pro) + AMP + diphosphate. Catalyzes the attachment of proline to tRNA(Pro) in a two-step reaction: proline is first activated by ATP to form Pro-AMP and then transferred to the acceptor end of tRNA(Pro). As ProRS can inadvertently accommodate and process non-cognate amino acids such as alanine and cysteine, to avoid such errors it has two additional distinct editing activities against alanine. One activity is designated as 'pretransfer' editing and involves the tRNA(Pro)-independent hydrolysis of activated Ala-AMP. The other activity is designated 'posttransfer' editing and involves deacylation of mischarged Ala-tRNA(Pro). The misacylated Cys-tRNA(Pro) is not edited by ProRS. The protein is Proline--tRNA ligase 1 of Bacillus thuringiensis subsp. konkukian (strain 97-27).